Consider the following 627-residue polypeptide: Alpha-terpineol synthase, chloroplastic (627 aa).

The N-terminal 53 residues, 1-53 (MAGITGVMNMKLAARPSSGRHSRGCRPAVVPSAGKQMLLVRRHPPGSASWPTR), are a transit peptide targeting the chloroplast. The segment at 13–90 (AARPSSGRHS…EDRASRNTSS (78 aa)) is disordered. (2E)-geranyl diphosphate contacts are provided by Arg339, Asp376, Asp380, Arg518, and Asp521. Mg(2+)-binding residues include Asp376 and Asp380. The DDXXD motif motif lies at 376 to 380 (DDTYD). Asp521, Ser525, and Glu529 together coordinate Mg(2+).

Belongs to the terpene synthase family. Tpsb subfamily. As to quaternary structure, monomer. The cofactor is Mg(2+). Requires Mn(2+) as cofactor. In terms of tissue distribution, expressed in seedling leaf sheaths and roots.

The protein localises to the plastid. It is found in the chloroplast. It carries out the reaction (2E)-geranyl diphosphate + H2O = (S)-alpha-terpineol + diphosphate. It catalyses the reaction (2E)-geranyl diphosphate = (4S)-limonene + diphosphate. The catalysed reaction is (2E)-geranyl diphosphate = gamma-terpinene + diphosphate. The enzyme catalyses (2E)-geranyl diphosphate = beta-myrcene + diphosphate. It carries out the reaction (2E)-geranyl diphosphate = terpinolene + diphosphate. It catalyses the reaction (2E)-geranyl diphosphate + H2O = 4-terpineol + diphosphate. It functions in the pathway secondary metabolite biosynthesis; terpenoid biosynthesis. Functionally, component of the volatile terpenes biosynthesis pathways. Mediates the synthesis of a blend of monoterpenes. Converts mainly geranyl diphosphate to alpha-terpineol. Also triggers the biosynthesis of minor monoterpenes including limonene, gamma-terpinene, beta-myrcene, terpinolene and 4-terpineol. The protein is Alpha-terpineol synthase, chloroplastic of Zea mays (Maize).